The chain runs to 956 residues: Golgin candidate 5 (956 aa).

Disordered regions lie at residues 70–230 and 278–298; these read MSFM…QHKI and IFES…SSDE. 2 stretches are compositionally biased toward basic and acidic residues: residues 77 to 89 and 118 to 129; these read SDEK…DSVR and ANKETNVRREAD. Composition is skewed to polar residues over residues 160–177 and 184–193; these read EYSL…SLQP and TASQDSQPEQ. The segment covering 206 to 219 has biased composition (basic and acidic residues); that stretch reads SEAKEVTVENKDTV. Positions 333–765 form a coiled coil; it reads SDSADVILEL…LIQKDLEREK (433 aa). Ser793 is subject to Phosphoserine. Positions 851–951 form a coiled coil; that stretch reads SAYEATLRQK…EMYREQVNML (101 aa).

Interacts with RABH1B and RABH1C, but not with RABD1 or RABD2A.

It is found in the golgi apparatus. The protein localises to the cytoplasm. In terms of biological role, golgi matrix protein playing a role in tethering of vesicles to Golgi membranes and in maintaining the overall structure of the Golgi apparatus. The sequence is that of Golgin candidate 5 (GC5) from Arabidopsis thaliana (Mouse-ear cress).